Here is a 368-residue protein sequence, read N- to C-terminus: Probable dual-specificity RNA methyltransferase RlmN (368 aa).

E111 functions as the Proton acceptor in the catalytic mechanism. Positions 117 to 355 constitute a Radical SAM core domain; the sequence is YPNRATLCIS…CTVRDTRGQE (239 aa). C124 and C360 are joined by a disulfide. Residues C131, C135, and C138 each contribute to the [4Fe-4S] cluster site. S-adenosyl-L-methionine-binding positions include 181 to 182, S215, 238 to 240, and N317; these read GE and SLH. The S-methylcysteine intermediate role is filled by C360.

The protein belongs to the radical SAM superfamily. RlmN family. [4Fe-4S] cluster is required as a cofactor.

The protein localises to the cytoplasm. It carries out the reaction adenosine(2503) in 23S rRNA + 2 reduced [2Fe-2S]-[ferredoxin] + 2 S-adenosyl-L-methionine = 2-methyladenosine(2503) in 23S rRNA + 5'-deoxyadenosine + L-methionine + 2 oxidized [2Fe-2S]-[ferredoxin] + S-adenosyl-L-homocysteine. It catalyses the reaction adenosine(37) in tRNA + 2 reduced [2Fe-2S]-[ferredoxin] + 2 S-adenosyl-L-methionine = 2-methyladenosine(37) in tRNA + 5'-deoxyadenosine + L-methionine + 2 oxidized [2Fe-2S]-[ferredoxin] + S-adenosyl-L-homocysteine. Its function is as follows. Specifically methylates position 2 of adenine 2503 in 23S rRNA and position 2 of adenine 37 in tRNAs. This is Probable dual-specificity RNA methyltransferase RlmN from Corynebacterium diphtheriae (strain ATCC 700971 / NCTC 13129 / Biotype gravis).